The following is a 224-amino-acid chain: Redox-sensing transcriptional repressor Rex (224 aa).

The segment at residues 17-56 is a DNA-binding region (H-T-H motif); it reads RYHRYLEELLKNDVKRISSRELSEKMGVTASQIRQDLNNF. 91 to 96 contacts NAD(+); sequence GAGNLG.

Belongs to the transcriptional regulatory Rex family. As to quaternary structure, homodimer.

It localises to the cytoplasm. Functionally, modulates transcription in response to changes in cellular NADH/NAD(+) redox state. In Thermoanaerobacter pseudethanolicus (strain ATCC 33223 / 39E) (Clostridium thermohydrosulfuricum), this protein is Redox-sensing transcriptional repressor Rex.